A 181-amino-acid polypeptide reads, in one-letter code: uncharacterized protein (181 aa).

At 1 to 14 (MQKCIMRSTEFKTH) the chain is on the cytoplasmic side. The helical transmembrane segment at 15–35 (FSFHSIFSFPLSAALLALISA) threads the bilayer. The Extracellular portion of the chain corresponds to 36–58 (SEPASKAFINVQFISSPLVKKEV). The chain crosses the membrane as a helical span at residues 59–79 (LPFIVSFHSLSSNGILSFSPF). Topologically, residues 80-84 (TSSNL) are cytoplasmic. A helical membrane pass occupies residues 85–105 (SIAQLPFLIKVPLLSMGSLAL). The Extracellular segment spans residues 106 to 116 (ENFNKFIPRAD). The chain crosses the membrane as a helical span at residues 117–137 (LVAAWVTIIMVFTFGNFLSTL). Residues 138–153 (SIKTGQNLWHLSKISS) are Cytoplasmic-facing. The helical transmembrane segment at 154-174 (SVSPLLLGIILGSQSGEIMLG) threads the bilayer. Residues 175–181 (KNLLITS) are Extracellular-facing.

It localises to the membrane. This is an uncharacterized protein from Saccharomyces cerevisiae (strain ATCC 204508 / S288c) (Baker's yeast).